Consider the following 332-residue polypeptide: Putative ankyrin repeat protein R896 (332 aa).

5 ANK repeats span residues 159–188 (GNDN…NVKS), 190–218 (DNCA…NVKA), 219–248 (DGNY…DIKA), 249–278 (AQNL…NIST), and 280–308 (NDYV…DIFS).

The sequence is that of Putative ankyrin repeat protein R896 from Acanthamoeba polyphaga mimivirus (APMV).